The sequence spans 254 residues: Ribonuclease 3 (254 aa).

The RNase III domain occupies 24-154 (LRRLQETLGV…VIGALFLDSG (131 aa)). Residue glutamate 67 participates in Mg(2+) binding. The active site involves aspartate 71. Residues aspartate 140 and glutamate 143 each coordinate Mg(2+). Glutamate 143 is an active-site residue. Residues 181-250 (DYKSTLQVLA…ARLAWEQLSG (70 aa)) enclose the DRBM domain.

Belongs to the ribonuclease III family. As to quaternary structure, homodimer. The cofactor is Mg(2+).

It localises to the cytoplasm. It catalyses the reaction Endonucleolytic cleavage to 5'-phosphomonoester.. In terms of biological role, digests double-stranded RNA. Involved in the processing of primary rRNA transcript to yield the immediate precursors to the large and small rRNAs (23S and 16S). Processes some mRNAs, and tRNAs when they are encoded in the rRNA operon. Processes pre-crRNA and tracrRNA of type II CRISPR loci if present in the organism. This Treponema pallidum (strain Nichols) protein is Ribonuclease 3.